The following is a 283-amino-acid chain: BTB/POZ domain-containing protein KCTD15 (283 aa).

The interval 1–32 (MPHRKERPSGSSLHTHGSTGTAEGGNMSRLSL) is disordered. Positions 9–21 (SGSSLHTHGSTGT) are enriched in low complexity. Phosphoserine is present on residues S31, S35, and S38. The BTB domain occupies 56 to 126 (APVHIDVGGH…LRTSKLLLPD (71 aa)).

Forms oligomers, predominantly homopentamers. Interacts with KCTD1, probably forming heteropentamers depending on its abundance in a cell-type dependent manner. Interacts with TFAP2A; this interaction inhibits TFAP2A transcriptional activation.

The protein resides in the nucleus. During embryonic development, it is involved in neural crest formation. Inhibits AP2 transcriptional activity by interaction with its activation domain. In Homo sapiens (Human), this protein is BTB/POZ domain-containing protein KCTD15 (KCTD15).